The following is a 325-amino-acid chain: Homeobox protein Hox-A1a (325 aa).

The Antp-type hexapeptide motif lies at 187-192 (TFDWMK). Disordered regions lie at residues 194–215 (KRNP…PNTV) and 264–325 (RMKQ…YPSN). The segment at residues 212 to 271 (PNTVRTNFTTKQLTELEKEFHFNKYLTRARRVEIAAALQLNETQVKIWFQNRRMKQKKRE) is a DNA-binding region (homeobox). Positions 285 to 300 (SGERNQEKVEDGESEK) are enriched in basic and acidic residues. The segment covering 301 to 317 (SVSAPSTPSPTSSTVSS) has biased composition (low complexity).

This sequence belongs to the Antp homeobox family. Labial subfamily.

It is found in the nucleus. Its function is as follows. Sequence-specific transcription factor which is part of a developmental regulatory system that provides cells with specific positional identities on the anterior-posterior axis. The polypeptide is Homeobox protein Hox-A1a (hoxa1a) (Takifugu rubripes (Japanese pufferfish)).